The following is an 87-amino-acid chain: Small ribosomal subunit protein bS20 (87 aa).

Over residues 1–11 (MANIKSAKKRA) the composition is skewed to basic residues. The tract at residues 1 to 27 (MANIKSAKKRAVQSEKRRQHNASQRSM) is disordered.

Belongs to the bacterial ribosomal protein bS20 family.

In terms of biological role, binds directly to 16S ribosomal RNA. This chain is Small ribosomal subunit protein bS20, found in Actinobacillus succinogenes (strain ATCC 55618 / DSM 22257 / CCUG 43843 / 130Z).